The primary structure comprises 304 residues: Tyrosine recombinase XerC (304 aa).

The region spanning 2–88 is the Core-binding (CB) domain; the sequence is ENVKNFVKLF…ALRSFYKFLM (87 aa). The Tyr recombinase domain occupies 109–294; sequence RIPKFLYQKE…SKEMLRNTYM (186 aa). Residues Arg-149, Lys-173, His-246, Arg-249, and His-272 contribute to the active site. The active-site O-(3'-phospho-DNA)-tyrosine intermediate is the Tyr-281.

The protein belongs to the 'phage' integrase family. XerC subfamily. Forms a cyclic heterotetrameric complex composed of two molecules of XerC and two molecules of XerD.

The protein localises to the cytoplasm. In terms of biological role, site-specific tyrosine recombinase, which acts by catalyzing the cutting and rejoining of the recombining DNA molecules. The XerC-XerD complex is essential to convert dimers of the bacterial chromosome into monomers to permit their segregation at cell division. It also contributes to the segregational stability of plasmids. This Bacillus subtilis (strain 168) protein is Tyrosine recombinase XerC.